The sequence spans 64 residues: Insect toxin OsI1 (64 aa).

An LCN-type CS-alpha/beta domain is found at 1–61 (DGYPKQKDGC…MWKYETNTCG (61 aa)). Intrachain disulfides connect cysteine 10/cysteine 60, cysteine 14/cysteine 35, cysteine 21/cysteine 42, and cysteine 25/cysteine 44. Glycine 61 bears the Glycine amide mark.

It belongs to the long (4 C-C) scorpion toxin superfamily. Sodium channel inhibitor family. Beta subfamily. As to expression, expressed by the venom gland.

Its subcellular location is the secreted. Its function is as follows. Depressant insect beta-toxins cause a transient contraction paralysis followed by a slow flaccid paralysis. They bind voltage-independently at site-4 of sodium channels (Nav) and shift the voltage of activation toward more negative potentials thereby affecting sodium channel activation and promoting spontaneous and repetitive firing. This toxin is active only on insects. This Orthochirus scrobiculosus (Central Asian scorpion) protein is Insect toxin OsI1.